A 199-amino-acid chain; its full sequence is Holliday junction branch migration complex subunit RuvA (199 aa).

The tract at residues 1-65 is domain I; the sequence is MIGWLHGQII…EDALLLYGFL (65 aa). Residues 66 to 144 are domain II; it reads DKEERSLFRS…QFDGSVSDTF (79 aa). Positions 144–148 are flexible linker; that stretch reads FQKQA. Residues 149–199 are domain III; sequence GSTHSQQEAISALEALGYKPQEAWKVVNKIDNGNKSCEQLIREALQILSSR.

This sequence belongs to the RuvA family. As to quaternary structure, homotetramer. Forms an RuvA(8)-RuvB(12)-Holliday junction (HJ) complex. HJ DNA is sandwiched between 2 RuvA tetramers; dsDNA enters through RuvA and exits via RuvB. An RuvB hexamer assembles on each DNA strand where it exits the tetramer. Each RuvB hexamer is contacted by two RuvA subunits (via domain III) on 2 adjacent RuvB subunits; this complex drives branch migration. In the full resolvosome a probable DNA-RuvA(4)-RuvB(12)-RuvC(2) complex forms which resolves the HJ.

It is found in the cytoplasm. The RuvA-RuvB-RuvC complex processes Holliday junction (HJ) DNA during genetic recombination and DNA repair, while the RuvA-RuvB complex plays an important role in the rescue of blocked DNA replication forks via replication fork reversal (RFR). RuvA specifically binds to HJ cruciform DNA, conferring on it an open structure. The RuvB hexamer acts as an ATP-dependent pump, pulling dsDNA into and through the RuvAB complex. HJ branch migration allows RuvC to scan DNA until it finds its consensus sequence, where it cleaves and resolves the cruciform DNA. The chain is Holliday junction branch migration complex subunit RuvA from Legionella pneumophila (strain Paris).